The following is a 468-amino-acid chain: Effector protein hopD2 (468 aa).

Residues 1–20 (MNPLQPIQHSITNSQMSGGQ) show a composition bias toward polar residues. The disordered stretch occupies residues 1 to 35 (MNPLQPIQHSITNSQMSGGQQLEAEGSQAHNSYSH). A Tyrosine-protein phosphatase domain is found at 143 to 468 (DASSPPSAND…TQWRAKIALE (326 aa)). Residue Cys-378 is the Phosphocysteine intermediate of the active site.

As to quaternary structure, interacts with EFR and FLS2 (via the kinase and cytoplasmic domains).

The protein localises to the secreted. The catalysed reaction is O-phospho-L-tyrosyl-[protein] + H2O = L-tyrosyl-[protein] + phosphate. Inhibited by sodium orthovanadate. Functionally, effector showing tyrosine-phosphatase activity required for host defense suppression. Functions inside plant cells causing suppression of HR (hypersensitive response), PR1 gene expression and oxidative burst probably by interfering with a MAPK (mitogen-activated protein kinase) pathway. MAPK cascades are known to activate defense-related transcription factors. Inhibits plant pattern-recognition receptors (PRRs) activation. The polypeptide is Effector protein hopD2 (hopD2) (Pseudomonas syringae pv. tomato (strain ATCC BAA-871 / DC3000)).